The following is a 492-amino-acid chain: Ammonium transporter MEP1 (492 aa).

Topologically, residues 1 to 18 (MESRTTGPLTTETYDGPT) are extracellular. Residues 19-39 (VAFMILGAALVFFMVPGLGFL) form a helical membrane-spanning segment. Over 40-49 (YSGLARRKSA) the chain is Cytoplasmic. The chain crosses the membrane as a helical span at residues 50–70 (LALIWVVLMATLVGILQWYFW). Residues 71 to 109 (GYSLAFSKSAPNNKFIGNLDSFGFRNVYGKKFDEDAYPE) are Extracellular-facing. A helical membrane pass occupies residues 110–130 (LAYATFQMMFSCVNLSIIAGA). Residues 131–140 (TAERGRLLPH) are Cytoplasmic-facing. A helical membrane pass occupies residues 141–161 (MVFLFILATIGYCPVTYWIWS). Topologically, residues 162–174 (PGGWAYQWGVLDW) are extracellular. A helical membrane pass occupies residues 175 to 195 (AGGGNIEILSAVSGFVYSWFL). At 196 to 210 (GKRNEKLLINFRPHN) the chain is on the cytoplasmic side. Residues 211–231 (VSLVTLGTSILWFGWLLFNSA) form a helical membrane-spanning segment. The Extracellular segment spans residues 232-240 (SSLSPNLRS). The chain crosses the membrane as a helical span at residues 241-261 (VYAFMNTCLSAITGGMTWCLL). Residues 262–268 (DYRSEKK) lie on the Cytoplasmic side of the membrane. The chain crosses the membrane as a helical span at residues 269-289 (WSTVGLCSGIISGLVAATPSS). A topological domain (extracellular) is located at residue Gly-290. The chain crosses the membrane as a helical span at residues 291-311 (CITLYGSLIQGIVAGVVCNFA). Residues 312-331 (TKLKYYAKVDDAMDILAEHG) lie on the Cytoplasmic side of the membrane. The chain crosses the membrane as a helical span at residues 332-352 (VAGVIGLIFNALFGADWVIGM). Residues 353 to 373 (DGTTEHEGGWVTHNYKQMYKQ) are Extracellular-facing. A helical transmembrane segment spans residues 374 to 394 (IAYIAASIGYTAAVTAIICFV). The Cytoplasmic portion of the chain corresponds to 395 to 492 (LGYIPGMRLR…PIHQEDPANR (98 aa)). Residues Ser-442 and Ser-445 each carry the phosphoserine modification. Residues 455-492 (HLAAERSSSGTNSSSDGNGEMIQSEKILPIHQEDPANR) are disordered. The span at 461-473 (SSSGTNSSSDGNG) shows a compositional bias: low complexity.

Belongs to the ammonia transporter channel (TC 1.A.11.2) family.

It localises to the membrane. Its function is as follows. Transporter for ammonium (both charged and uncharged NH3 and NH4) to use as a nitrogen source. Can also transport methylamine. The affinity of MEP1 is about twenty times lower than that of MEP2. MEP3 has the lowest affinity. This chain is Ammonium transporter MEP1 (MEP1), found in Saccharomyces cerevisiae (strain ATCC 204508 / S288c) (Baker's yeast).